The primary structure comprises 82 residues: Leucinostatins biosynthesis cluster protein M (82 aa).

A disordered region spans residues 34–82; sequence ARNETHDPSGPRAPVSSMRLGPRSRPYHHGTARLRGSPNCSRDSSSAAT. The segment covering 71-82 has biased composition (polar residues); that stretch reads PNCSRDSSSAAT.

In terms of biological role, part of the gene cluster that mediates the biosynthesis of the lipopeptide antibiotics leucinostatins that show extensive biological activities, including antimalarial, antiviral, antibacterial, antifungal, and antitumor activities, as well as phytotoxic. The function of lcsM within the leucinostatins biosynthesis has not been identified yet. This chain is Leucinostatins biosynthesis cluster protein M, found in Purpureocillium lilacinum (Paecilomyces lilacinus).